A 711-amino-acid chain; its full sequence is Polyribonucleotide nucleotidyltransferase (711 aa).

Positions 486 and 492 each coordinate Mg(2+). In terms of domain architecture, KH spans 553–612 (PRIHTIKISTDKIKDVIGKGGSVIRALTEETGTTIEIEDDGTVKIAATDGEKAKYAIRRI). The region spanning 622–690 (GRIYNGKVTR…RQGRVRLSIK (69 aa)) is the S1 motif domain. The segment at 689–711 (IKEATEQTQPAAAPEAPTSEQGE) is disordered. The segment covering 694-711 (EQTQPAAAPEAPTSEQGE) has biased composition (low complexity).

Belongs to the polyribonucleotide nucleotidyltransferase family. As to quaternary structure, component of the RNA degradosome, which is a multiprotein complex involved in RNA processing and mRNA degradation. The cofactor is Mg(2+).

It is found in the cytoplasm. It catalyses the reaction RNA(n+1) + phosphate = RNA(n) + a ribonucleoside 5'-diphosphate. Functionally, involved in mRNA degradation. Catalyzes the phosphorolysis of single-stranded polyribonucleotides processively in the 3'- to 5'-direction. In Salmonella arizonae (strain ATCC BAA-731 / CDC346-86 / RSK2980), this protein is Polyribonucleotide nucleotidyltransferase.